We begin with the raw amino-acid sequence, 117 residues long: MLKEFKEFALKGNVLDLAIAVVMGAAFNKIVTSLVTYIIMPLIGKIFGSVDFAKDWEFWGIKYGLFIQSIIDFIIVAIALFIFVKIANTLVKKEEPEEEIEENTVLLTEIRDLLRAK.

A run of 3 helical transmembrane segments spans residues 7-27 (EFAL…GAAF), 30-50 (IVTS…FGSV), and 64-84 (GLFI…FIFV).

This sequence belongs to the MscL family. In terms of assembly, homopentamer.

It localises to the cell membrane. Functionally, channel that opens in response to stretch forces in the membrane lipid bilayer. May participate in the regulation of osmotic pressure changes within the cell. This chain is Large-conductance mechanosensitive channel, found in Staphylococcus haemolyticus (strain JCSC1435).